The primary structure comprises 155 residues: Interleukin-2 (155 aa).

Positions 1–20 are cleaved as a signal peptide; the sequence is MYKIQLLSCIALTLALVANG. Residue threonine 23 is glycosylated (O-linked (GalNAc...) threonine). A disulfide bridge links cysteine 79 with cysteine 127.

It belongs to the IL-2 family.

Its subcellular location is the secreted. Its function is as follows. Cytokine produced by activated CD4-positive helper T-cells and to a lesser extend activated CD8-positive T-cells and natural killer (NK) cells that plays pivotal roles in the immune response and tolerance. Binds to a receptor complex composed of either the high-affinity trimeric IL-2R (IL2RA/CD25, IL2RB/CD122 and IL2RG/CD132) or the low-affinity dimeric IL-2R (IL2RB and IL2RG). Interaction with the receptor leads to oligomerization and conformation changes in the IL-2R subunits resulting in downstream signaling starting with phosphorylation of JAK1 and JAK3. In turn, JAK1 and JAK3 phosphorylate the receptor to form a docking site leading to the phosphorylation of several substrates including STAT5. This process leads to activation of several pathways including STAT, phosphoinositide-3-kinase/PI3K and mitogen-activated protein kinase/MAPK pathways. Functions as a T-cell growth factor and can increase NK-cell cytolytic activity as well. Promotes strong proliferation of activated B-cells and subsequently immunoglobulin production. Plays a pivotal role in regulating the adaptive immune system by controlling the survival and proliferation of regulatory T-cells, which are required for the maintenance of immune tolerance. Moreover, participates in the differentiation and homeostasis of effector T-cell subsets, including Th1, Th2, Th17 as well as memory CD8-positive T-cells. The protein is Interleukin-2 (IL2) of Moschus berezovskii (Chinese forest musk deer).